A 76-amino-acid polypeptide reads, in one-letter code: Transcription attenuation protein MtrB (76 aa).

Belongs to the MtrB family. In terms of assembly, oligomer of 11 identical subunits arranged in doughnut-like structure.

In terms of biological role, required for transcription attenuation control in the Trp operon. This trans-acting factor seems to recognize a 10 bases nucleotide sequence in the Trp leader transcript causing transcription termination. Binds the leader RNA only in presence of L-tryptophan. This chain is Transcription attenuation protein MtrB (mtrB), found in Bacillus pumilus (Bacillus mesentericus).